Here is a 1017-residue protein sequence, read N- to C-terminus: Nonsense-mediated mRNA decay factor SMG5 (1017 aa).

Position 2 is an N-acetylserine (Ser-2). Phosphoserine is present on residues Ser-2 and Ser-423. Disordered stretches follow at residues 406 to 562 (GENP…PSEA) and 597 to 640 (TEPN…CRNE). The span at 448–467 (KSRKHSRLSCLRRRRRHHPP) shows a compositional bias: basic residues. Over residues 486-496 (DSAQASDGSDS) the composition is skewed to low complexity. Positions 620–629 (ASEDGSESEG) are enriched in acidic residues. The stretch at 798-842 (AQSEQESLLQQAQAQFRMAEEEARRNRLMRDMAQLRLQLEVSQLE) forms a coiled coil. Positions 873-996 (RQLATSGRFI…GPMQAALQAA (124 aa)) constitute a PINc domain.

As to quaternary structure, interacts with TERT, PPP2CA and SMG1. Part of a complex that contains SMG1, SMG5, SMG7, PPP2CA, a short isoform of UPF3A (isoform UPF3AS, but not isoform UPF3AL) and phosphorylated UPF1. Not detected in complexes that contain unphosphorylated UPF1.

The protein localises to the cytoplasm. It localises to the nucleus. Functionally, plays a role in nonsense-mediated mRNA decay. Does not have RNase activity by itself. Promotes dephosphorylation of UPF1. Together with SMG7 is thought to provide a link to the mRNA degradation machinery involving exonucleolytic pathways, and to serve as an adapter for UPF1 to protein phosphatase 2A (PP2A), thereby triggering UPF1 dephosphorylation. Necessary for TERT activity. The polypeptide is Nonsense-mediated mRNA decay factor SMG5 (Mus musculus (Mouse)).